The following is a 201-amino-acid chain: Recombination protein RecR (201 aa).

Residues 57-72 (CTHCRTFTEEESCAIC) form a C4-type zinc finger. A Toprim domain is found at 81–176 (GFLCVVEQPS…KVSRIAHGIP (96 aa)).

Belongs to the RecR family.

May play a role in DNA repair. It seems to be involved in an RecBC-independent recombinational process of DNA repair. It may act with RecF and RecO. In Histophilus somni (strain 2336) (Haemophilus somnus), this protein is Recombination protein RecR.